The chain runs to 248 residues: Pyridoxine 5'-phosphate synthase (248 aa).

Asn12 is a binding site for 3-amino-2-oxopropyl phosphate. 14–15 is a binding site for 1-deoxy-D-xylulose 5-phosphate; it reads DH. Residue Arg23 participates in 3-amino-2-oxopropyl phosphate binding. His48 functions as the Proton acceptor in the catalytic mechanism. The 1-deoxy-D-xylulose 5-phosphate site is built by Arg50 and His55. Catalysis depends on Glu75, which acts as the Proton acceptor. Residue Thr105 participates in 1-deoxy-D-xylulose 5-phosphate binding. His196 (proton donor) is an active-site residue. Residues Gly197 and 218-219 contribute to the 3-amino-2-oxopropyl phosphate site; that span reads GH.

Belongs to the PNP synthase family. In terms of assembly, homooctamer; tetramer of dimers.

The protein localises to the cytoplasm. It carries out the reaction 3-amino-2-oxopropyl phosphate + 1-deoxy-D-xylulose 5-phosphate = pyridoxine 5'-phosphate + phosphate + 2 H2O + H(+). It participates in cofactor biosynthesis; pyridoxine 5'-phosphate biosynthesis; pyridoxine 5'-phosphate from D-erythrose 4-phosphate: step 5/5. Its function is as follows. Catalyzes the complicated ring closure reaction between the two acyclic compounds 1-deoxy-D-xylulose-5-phosphate (DXP) and 3-amino-2-oxopropyl phosphate (1-amino-acetone-3-phosphate or AAP) to form pyridoxine 5'-phosphate (PNP) and inorganic phosphate. The sequence is that of Pyridoxine 5'-phosphate synthase from Pseudomonas paraeruginosa (strain DSM 24068 / PA7) (Pseudomonas aeruginosa (strain PA7)).